Reading from the N-terminus, the 359-residue chain is Anhydro-N-acetylmuramic acid kinase (359 aa).

12–19 (GTSLDGVD) is an ATP binding site.

Belongs to the anhydro-N-acetylmuramic acid kinase family.

It catalyses the reaction 1,6-anhydro-N-acetyl-beta-muramate + ATP + H2O = N-acetyl-D-muramate 6-phosphate + ADP + H(+). It functions in the pathway amino-sugar metabolism; 1,6-anhydro-N-acetylmuramate degradation. The protein operates within cell wall biogenesis; peptidoglycan recycling. Catalyzes the specific phosphorylation of 1,6-anhydro-N-acetylmuramic acid (anhMurNAc) with the simultaneous cleavage of the 1,6-anhydro ring, generating MurNAc-6-P. Is required for the utilization of anhMurNAc either imported from the medium or derived from its own cell wall murein, and thus plays a role in cell wall recycling. This chain is Anhydro-N-acetylmuramic acid kinase, found in Sulfurovum sp. (strain NBC37-1).